The primary structure comprises 842 residues: CRM-domain containing factor CFM3, chloroplastic/mitochondrial (842 aa).

A chloroplast and mitochondrion-targeting transit peptide spans 1–82 (MAMASSPACH…RSSGRSTMSL (82 aa)). Disordered regions lie at residues 49–80 (AALDLRPEPSPSSDSDDEDAVGASRSSGRSTM), 141–160 (RFPWERPMPPPEAAPRSARS), and 254–290 (VDYDEPEPTKKSKKNSQSLAMDFPIKGSSNPSLLPTE). One can recognise a CRM 1 domain in the interval 167-263 (LTLPAAELRR…VDYDEPEPTK (97 aa)). Over residues 280–290 (GSSNPSLLPTE) the composition is skewed to polar residues. CRM domains lie at 371–468 (PSLS…ELAE) and 582–682 (ETIT…SSLR). The stretch at 703–732 (QALSRHFAKLNRKVERLKAELVQMEDVKEQ) forms a coiled coil. The segment at 768–842 (VAGATADDDG…DRRNHDVNEY (75 aa)) is disordered. Acidic residues predominate over residues 786–812 (DEADYPDSDDEAGDCSEDEGEDDEDEA). The segment covering 831-842 (DTDRRNHDVNEY) has biased composition (basic and acidic residues).

In terms of assembly, interacts with RNA. Part of large ribonucleo-protein particles that contain CAF1 and/or CAF2, and RNC1.

It is found in the plastid. Its subcellular location is the chloroplast stroma. The protein resides in the mitochondrion. Its function is as follows. Binds specific group II introns in chloroplasts and facilitates their splicing. Acts on subgroup IIB introns. The substrates of the subgroup IIB also require the CRM domain proteins CAF1 or CAF2, with a simultaneous binding of CFM3 and CAF1 or CAF2. May influence the biogenesis of the mitochondrial small ribosomal subunit. This Zea mays (Maize) protein is CRM-domain containing factor CFM3, chloroplastic/mitochondrial.